A 1263-amino-acid polypeptide reads, in one-letter code: Condensin complex subunit dpy-26 (1263 aa).

Residues 1–10 show a composition bias toward polar residues; it reads MDVPSSSNVT. Residues 1 to 29 form a disordered region; that stretch reads MDVPSSSNVTGRRKRQVLDDDEDDGFRST. Residues 691 to 725 are a coiled coil; that stretch reads NEQMDETEVEERNEQDVQRELEDIALAADEVAELM. Disordered stretches follow at residues 1098–1118 and 1225–1263; these read YQAA…GTAN and FSNL…EMEE. Positions 1106–1118 are enriched in polar residues; it reads NNQPTTSTYGTAN. The span at 1230–1241 shows a compositional bias: basic residues; it reads RRPKAVPVRKGR.

Component of the condensin I complex, which contains the mix-1/SMC2 and smc-4/SMC4 heterodimer, and three non SMC subunits that probably regulate the complex: dpy-26, capg-1 and dpy-28. Within the complex, interacts with dpy-28, mix-1, smc-4 and capg-1. Component of the dosage compensation complex, which consists of the condensin I-like components mix-1/SMC2 and dpy-27/SMC4, and the three non SMC subunits dpy-26, capg-1 and dpy-28. Within the complex, interacts with dpy-27, dpy-28, mix-1 and capg-1. The interaction with dpy-27 is required for dpy-27 protein stability. Interacts with smcl-1. As to expression, expressed in embryos and in somatic and germline tissues in L4 stage larvae (at protein level).

The protein localises to the nucleus. It is found in the chromosome. In terms of biological role, required for both chromosome condensation and segregation and for X-chromosome dosage compensation depending on its binding partners. Member of the condensin I complex, a complex required for conversion of interphase chromatin into mitotic-like condense chromosomes and for proper chromosome segregation in mitosis and meiosis. As a member of the condensin I complex, further controls the crossover number and distribution in meiosis by restricting double strand break formation, probably by influencing higher-order chromosome structure. Plays a role in robust cytokinesis upon presence of chromatin obstructions. Also a member of the condensin I-like dosage compensation complex that associates specifically with hermaphrodite X chromosomes to reduce their gene transcription during interphase, possibly through chromatin reorganization. As a member of the dosage compensation complex, also binds to regulatory regions of the autosomal her-1 gene, required for male development, possibly contributing to its repression in hermaphrodites. This chain is Condensin complex subunit dpy-26, found in Caenorhabditis elegans.